Reading from the N-terminus, the 304-residue chain is E3 ubiquitin-protein ligase CHIP (304 aa).

Residues 1 to 10 are compositionally biased toward basic and acidic residues; it reads MKGKEEKEGG. A disordered region spans residues 1-30; the sequence is MKGKEEKEGGARLGTGGGGSPDKSPSAQEL. A Glycyl lysine isopeptide (Lys-Gly) (interchain with G-Cter in ubiquitin) cross-link involves residue lysine 2. Over residues 11–20 the composition is skewed to gly residues; the sequence is ARLGTGGGGS. Residue serine 20 is modified to Phosphoserine. Residue lysine 23 forms a Glycyl lysine isopeptide (Lys-Gly) (interchain with G-Cter in ubiquitin) linkage. A phosphoserine mark is found at serine 24 and serine 26. TPR repeat units follow at residues 27–60, 61–94, and 96–128; these read AQEL…NPLV, AVYY…DGQS, and KAHF…AKEQ. The segment at 102 to 201 is required for interaction with MAPK7; sequence GQCQLEMESY…GHIRAQQACI (100 aa). Residues 143 to 197 form a required for interaction with and ubiquitination of MYOCD region; that stretch reads AKKKRWNSIEERRIHQESELHSYLTRLIAAERERELEECQRNHEGHEDDGHIRAQ. Positions 144–198 are required for interaction with FOXO1; that stretch reads KKKRWNSIEERRIHQESELHSYLTRLIAAERERELEECQRNHEGHEDDGHIRAQQ. Residues 144-304 are required for ubiquitination of FOXO1; the sequence is KKKRWNSIEE…ISENGWVEDY (161 aa). A Phosphoserine modification is found at serine 150. Residues lysine 222 and lysine 256 each participate in a glycyl lysine isopeptide (Lys-Gly) (interchain with G-Cter in ubiquitin) cross-link. The 75-residue stretch at 227–301 folds into the U-box domain; that stretch reads DIPDYLCGKI…DAFISENGWV (75 aa). Serine 274 bears the Phosphoserine mark.

In terms of assembly, homodimer. Interacts with BAG2, and with the E2 ubiquitin conjugating enzymes UBE2D1, UBE2D2 and UBE2D3. Detected in a ternary complex containing STUB1, HSPA1A and HSPBP1. Part of a complex composed of STUB1/CHIP, VCP/p97, CHRNA3, and UBXN2A that modulates the ubiquitination and endoplasmic reticulum-associated degradation (ERAD) of CHRNA3. Within the complex UBXN2A acts as a scaffold protein required for the interaction of CHRNA3 with VCP/p97, this interaction also inhibits CHRNA3 ubiquitination by STUB1/CHIP and subsequently ERAD. Interacts with MKKS. Interacts with DNAAF4. Interacts (via the U-box domain) with the UBE2V2-UBE2N heterodimer; the complex has a specific 'Lys-63'-linked polyubiquitination activity. Interacts (when monoubiquitinated) with ATXN3. Interacts with UBE2W. Interacts with DNAJB6. Interacts with FLCN and HSP90AA1. Interacts with HSP90. Interacts with UBE2N and UBE2V1. Interacts (via TPR repeats) with HSPA8 (via C-terminus). Interacts (via TPR repeats) with HSPA1A (via C-terminus). Interacts with the non-acetylated form of HSPA1A and HSPA1B. Interacts with SMAD3 and HSP90AB1. Interacts with UBE4B. Interacts with PRMT5. Interacts with MYOCD (via C-terminus). Interacts with FOXO1 (when phosphorylated on 'Ser-253'). Interacts with MAPK7/ERK5; the interaction is enhanced in the presence of IGF1 or MAP2K5 and promotes STUB1/CHIP E3 ligase activity. Interacts with and ubiquitinates ESR1; the interaction is promoted in the absence of estradiol (17-beta-estradiol/E2). Interacts with ESR2. Interacts with and ubiquitinates NFATC3; HSPA1A/HSP70 is required as a co-chaperone. In macrophages, interacts with PAQR3; the interaction promotes PPARG poylubiquitination and STUB1-mediated degradation. Component of the chaperone-assisted selective autophagy (CASA) complex consisting of BAG3, HSPA8/HSC70, HSPB8 and STUB1/CHIP. Auto-ubiquitinated; mediated by UBE2D1 and UBE2D2 and enhanced in the presence of MAP2K5. Monoubiquitinated at Lys-2 following cell stress by UBE2W, promoting the interaction with ATXN3. In terms of tissue distribution, expressed in the brain.

Its subcellular location is the cytoplasm. The protein resides in the nucleus. The protein localises to the mitochondrion. It carries out the reaction S-ubiquitinyl-[E2 ubiquitin-conjugating enzyme]-L-cysteine + [acceptor protein]-L-lysine = [E2 ubiquitin-conjugating enzyme]-L-cysteine + N(6)-ubiquitinyl-[acceptor protein]-L-lysine.. It functions in the pathway protein modification; protein ubiquitination. E3 ubiquitin-protein ligase which targets misfolded chaperone substrates towards proteasomal degradation. Plays a role in the maintenance of mitochondrial morphology and promotes mitophagic removal of dysfunctional mitochondria; thereby acts as a protector against apoptosis in response to cellular stress. Negatively regulates vascular smooth muscle contraction, via degradation of the transcriptional activator MYOCD and subsequent loss of transcription of genes involved in vascular smooth muscle contraction. Promotes survival and proliferation of cardiac smooth muscle cells via ubiquitination and degradation of FOXO1, resulting in subsequent repression of FOXO1-mediated transcription of pro-apoptotic genes. Ubiquitinates ICER-type isoforms of CREM and targets them for proteasomal degradation, thereby acts as a positive effector of MAPK/ERK-mediated inhibition of apoptosis in cardiomyocytes. Inhibits lipopolysaccharide-induced apoptosis and hypertrophy in cardiomyocytes, via ubiquitination and subsequent proteasomal degradation of NFATC3. Collaborates with ATXN3 in the degradation of misfolded chaperone substrates: ATXN3 restricting the length of ubiquitin chain attached to STUB1/CHIP substrates and preventing further chain extension. Ubiquitinates NOS1 in concert with Hsp70 and Hsp40. Modulates the activity of several chaperone complexes, including Hsp70, Hsc70 and Hsp90. Ubiquitinates CHRNA3 targeting it for endoplasmic reticulum-associated degradation in cortical neurons, as part of the STUB1-VCP-UBXN2A complex. Ubiquitinates and promotes ESR1 proteasomal degradation in response to age-related circulating estradiol (17-beta-estradiol/E2) decline, thereby promotes neuronal apoptosis in response to ischemic reperfusion injury. Mediates transfer of non-canonical short ubiquitin chains to HSPA8 that have no effect on HSPA8 degradation. Mediates polyubiquitination of DNA polymerase beta (POLB) at 'Lys-41', 'Lys-61' and 'Lys-81', thereby playing a role in base-excision repair: catalyzes polyubiquitination by amplifying the HUWE1/ARF-BP1-dependent monoubiquitination and leading to POLB-degradation by the proteasome. Mediates polyubiquitination of CYP3A4. Ubiquitinates EPHA2 and may regulate the receptor stability and activity through proteasomal degradation. Acts as a co-chaperone for HSPA1A and HSPA1B chaperone proteins and promotes ubiquitin-mediated protein degradation. Negatively regulates the suppressive function of regulatory T-cells (Treg) during inflammation by mediating the ubiquitination and degradation of FOXP3 in a HSPA1A/B-dependent manner. Catalyzes monoubiquitination of SIRT6, preventing its degradation by the proteasome. Likely mediates polyubiquitination and down-regulates plasma membrane expression of PD-L1/CD274, an immune inhibitory ligand critical for immune tolerance to self and antitumor immunity. Negatively regulates TGF-beta signaling by modulating the basal level of SMAD3 via ubiquitin-mediated degradation. Plays a role in the degradation of TP53. Mediates ubiquitination of RIPK3 leading to its subsequent proteasome-dependent degradation. May regulate myosin assembly in striated muscles together with UBE4B and VCP/p97 by targeting myosin chaperone UNC45B for proteasomal degradation. Ubiquitinates PPARG in macrophages playing a role in M2 macrophages polarization and angiogenesis. The protein is E3 ubiquitin-protein ligase CHIP of Mus musculus (Mouse).